We begin with the raw amino-acid sequence, 442 residues long: Dihydrolipoyllysine-residue acetyltransferase component of pyruvate dehydrogenase complex (442 aa).

One can recognise a Lipoyl-binding domain in the interval 2-77; the sequence is AFEFKLPDIG…TVGQTIITFD (76 aa). Lysine 43 carries the N6-lipoyllysine modification. The segment covering 84-97 has biased composition (basic and acidic residues); that stretch reads LQFKGSDESDDAKT. Positions 84-136 are disordered; sequence LQFKGSDESDDAKTEAQVQSTAEAGQDVAKEEQAQEPAKATGAGQQDQAEVDP. In terms of domain architecture, Peripheral subunit-binding (PSBD) spans 141 to 178; that stretch reads IAMPSVRKYAREKGVDIRKVTGSGNNGRVVKEDIDSFV. Residues 182 to 208 are compositionally biased toward low complexity; that stretch reads AQEAAPQETAAPQETAAKPAAAPAPEG. The segment at 182-215 is disordered; it reads AQEAAPQETAAPQETAAKPAAAPAPEGEFPETRE. Histidine 413 is a catalytic residue.

Belongs to the 2-oxoacid dehydrogenase family. In terms of assembly, forms a 24-polypeptide structural core with octahedral symmetry. (R)-lipoate is required as a cofactor.

It catalyses the reaction N(6)-[(R)-dihydrolipoyl]-L-lysyl-[protein] + acetyl-CoA = N(6)-[(R)-S(8)-acetyldihydrolipoyl]-L-lysyl-[protein] + CoA. The pyruvate dehydrogenase complex catalyzes the overall conversion of pyruvate to acetyl-CoA and CO(2). It contains multiple copies of three enzymatic components: pyruvate dehydrogenase (E1), dihydrolipoamide acetyltransferase (E2) and lipoamide dehydrogenase (E3). In terms of biological role, the B.subtilis PDH complex also possesses branched-chain 2-oxoacid dehydrogenase (BCDH) activity. In Bacillus subtilis (strain 168), this protein is Dihydrolipoyllysine-residue acetyltransferase component of pyruvate dehydrogenase complex (pdhC).